Consider the following 131-residue polypeptide: Peptide methionine sulfoxide reductase MsrB (131 aa).

The MsrB domain maps to leucine 8–arginine 130. Residues cysteine 47, cysteine 50, cysteine 96, and cysteine 99 each contribute to the Zn(2+) site. Cysteine 119 (nucleophile) is an active-site residue.

Belongs to the MsrB Met sulfoxide reductase family. Zn(2+) is required as a cofactor.

It catalyses the reaction L-methionyl-[protein] + [thioredoxin]-disulfide + H2O = L-methionyl-(R)-S-oxide-[protein] + [thioredoxin]-dithiol. The protein is Peptide methionine sulfoxide reductase MsrB of Pseudomonas putida (strain ATCC 700007 / DSM 6899 / JCM 31910 / BCRC 17059 / LMG 24140 / F1).